Here is a 282-residue protein sequence, read N- to C-terminus: MEMO1 family protein Msm_1438 (282 aa).

The protein belongs to the MEMO1 family.

This is MEMO1 family protein Msm_1438 from Methanobrevibacter smithii (strain ATCC 35061 / DSM 861 / OCM 144 / PS).